A 384-amino-acid chain; its full sequence is Magnesium transporter MRS2-I (384 aa).

2 consecutive transmembrane segments (helical) span residues 319 to 339 (LFLSSGTVCLSLYSLVAGIFG) and 356 to 376 (WVVLVSGLFCAFMFVSIVAYA). Residues 339 to 341 (GMN) carry the Required for magnesium transport activity motif.

The protein belongs to the CorA metal ion transporter (MIT) (TC 1.A.35.5) family.

It localises to the membrane. Its function is as follows. Magnesium transporter that may mediate the influx of magnesium. This is Magnesium transporter MRS2-I (MRS2-I) from Oryza sativa subsp. japonica (Rice).